We begin with the raw amino-acid sequence, 405 residues long: CMP-sialic acid transporter 5 (405 aa).

Over 1 to 43 the chain is Cytoplasmic; sequence MQRNGVVECSVCRSRLVVPSPRSVSRAYDKHRSKISSKFRALN. Residues 44 to 64 form a helical membrane-spanning segment; sequence VLLVVGDCILVGLQPILVFMS. Topologically, residues 65–74 are lumenal; sequence KVDGKFQFSP. The chain crosses the membrane as a helical span at residues 75-95; the sequence is ISVNFLTEVTKVVFAIVMLII. Residues 96-121 lie on the Cytoplasmic side of the membrane; that stretch reads QSRKQKVGEKPLLARSTFIQAARNNA. A helical transmembrane segment spans residues 122–142; the sequence is LLAVPALLYAINNYLKFIMQL. Topologically, residues 143 to 147 are lumenal; the sequence is YFNPS. Residues 148–168 traverse the membrane as a helical segment; that stretch reads TVKMLSNLKVLVIAVLLKFIM. Topologically, residues 169-171 are cytoplasmic; the sequence is KRR. Residues 172-192 form a helical membrane-spanning segment; the sequence is FSVIQWEALALLLIGISINQL. The Lumenal segment spans residues 193–200; it reads RTVPAGNT. Residues 201-221 traverse the membrane as a helical segment; sequence AFGLPVTAIAYIYTLIFVTVP. The Cytoplasmic segment spans residues 222-244; that stretch reads SLASVYNEYALKSQYDTSIYLQN. A helical transmembrane segment spans residues 245 to 265; it reads LFLYGYGAIFNFLGILGTALF. Topologically, residues 266–281 are lumenal; the sequence is QGPESFNILRGHSRAT. The helical transmembrane segment at 282–302 threads the bilayer; the sequence is MFLICNNAAQGILSSFFFKYA. At 303–322 the chain is on the cytoplasmic side; that stretch reads DTILKKYSSTVATIFTGLAS. Residues 323–343 traverse the membrane as a helical segment; it reads AAFLGHTLTINFLLGISVVFI. Over 344-405 the chain is Lumenal; sequence SMHQFFSPLA…TDERQPLLPT (62 aa). The disordered stretch occupies residues 368–405; the sequence is DTQNHRSSESSFVNMTAGAAEDASHRIGTDERQPLLPT. The span at 389–405 shows a compositional bias: basic and acidic residues; sequence DASHRIGTDERQPLLPT.

The protein belongs to the nucleotide-sugar transporter family. CMP-Sialate:CMP antiporter (TC 2.A.7.12) subfamily.

It localises to the golgi apparatus membrane. Functionally, sugar transporter involved in the transport of CMP-sialic acid from the cytoplasm into the Golgi. May transport important nucleotide sugars such as CMP-Kdo (2-keto-3-deoxy-D-manno-octulosonic acid) in physiological conditions. The chain is CMP-sialic acid transporter 5 from Oryza sativa subsp. japonica (Rice).